Reading from the N-terminus, the 500-residue chain is Abscisic acid 8'-hydroxylase 3 (500 aa).

A helical membrane pass occupies residues 3–23 (ASFVIVIVISFFISLAFMCYV). Residue Cys-426 participates in heme binding.

Belongs to the cytochrome P450 family. Requires heme as cofactor.

Its subcellular location is the membrane. It carries out the reaction 2-cis-(+)-abscisate + reduced [NADPH--hemoprotein reductase] + O2 = (+)-8'-hydroxyabscisate + oxidized [NADPH--hemoprotein reductase] + H2O + H(+). It participates in plant hormone degradation; abscisic acid degradation. Involved in the oxidative degradation of abscisic acid. In Oryza sativa subsp. japonica (Rice), this protein is Abscisic acid 8'-hydroxylase 3 (CYP707A7).